The sequence spans 318 residues: BES1/BZR1 homolog protein 2 (318 aa).

Positions 1-13 (MAAGGGGGGGGSS) are enriched in gly residues. Disordered regions lie at residues 1–34 (MAAGGGGGGGGSSSGRTPTWKERENNKKRERRRR), 84–133 (FKPP…PSPS), 166–195 (NSAPVTPPLSSPTSRGSKRKLTSEQLPNGG), and 209–231 (APSSPTRRAGHQTPPTIPECDES). The segment at 16-97 (RTPTWKEREN…ASDISGTPTN (82 aa)) is required for DNA-binding. The segment covering 91 to 101 (ISGTPTNFSTN) has biased composition (polar residues). Over residues 102 to 133 (SSIQPSPQSSAFPSPAPSYHGSPVSSSFPSPS) the composition is skewed to low complexity.

It belongs to the BZR/LAT61 family. Post-translationally, phosphorylated. Phosphorylation increases protein degradation.

The polypeptide is BES1/BZR1 homolog protein 2 (BEH2) (Arabidopsis thaliana (Mouse-ear cress)).